Here is a 408-residue protein sequence, read N- to C-terminus: Serine-rich antigen (408 aa).

A run of 2 repeats spans residues 209-214 and 230-235. The tract at residues 209-235 is 2 X 6 AA repeats of S-V-A-Q-S-E; that stretch reads SVAQSEEHGSDSMSQSYNTCGSVAQSE.

This sequence belongs to the mycobacterial PPE family.

The sequence is that of Serine-rich antigen (sra) from Mycobacterium leprae (strain TN).